Reading from the N-terminus, the 434-residue chain is Serine hydroxymethyltransferase (434 aa).

(6S)-5,6,7,8-tetrahydrofolate-binding positions include Leu124 and 128–130 (GHL). An N6-(pyridoxal phosphate)lysine modification is found at Lys233. Position 249 (Glu249) interacts with (6S)-5,6,7,8-tetrahydrofolate.

The protein belongs to the SHMT family. As to quaternary structure, homodimer. It depends on pyridoxal 5'-phosphate as a cofactor.

It is found in the cytoplasm. It catalyses the reaction (6R)-5,10-methylene-5,6,7,8-tetrahydrofolate + glycine + H2O = (6S)-5,6,7,8-tetrahydrofolate + L-serine. The protein operates within one-carbon metabolism; tetrahydrofolate interconversion. It functions in the pathway amino-acid biosynthesis; glycine biosynthesis; glycine from L-serine: step 1/1. Catalyzes the reversible interconversion of serine and glycine with tetrahydrofolate (THF) serving as the one-carbon carrier. This reaction serves as the major source of one-carbon groups required for the biosynthesis of purines, thymidylate, methionine, and other important biomolecules. Also exhibits THF-independent aldolase activity toward beta-hydroxyamino acids, producing glycine and aldehydes, via a retro-aldol mechanism. This chain is Serine hydroxymethyltransferase, found in Synechococcus sp. (strain JA-3-3Ab) (Cyanobacteria bacterium Yellowstone A-Prime).